The primary structure comprises 113 residues: Integration host factor subunit alpha (113 aa).

It belongs to the bacterial histone-like protein family. As to quaternary structure, heterodimer of an alpha and a beta chain.

In terms of biological role, this protein is one of the two subunits of integration host factor, a specific DNA-binding protein that functions in genetic recombination as well as in transcriptional and translational control. This is Integration host factor subunit alpha from Rhodopseudomonas palustris (strain BisA53).